The primary structure comprises 232 residues: Cytidylate kinase (232 aa).

ATP is bound at residue 11–19 (GPAGAGKST).

It belongs to the cytidylate kinase family. Type 1 subfamily.

The protein localises to the cytoplasm. It carries out the reaction CMP + ATP = CDP + ADP. The enzyme catalyses dCMP + ATP = dCDP + ADP. In Roseiflexus castenholzii (strain DSM 13941 / HLO8), this protein is Cytidylate kinase.